A 149-amino-acid chain; its full sequence is Putative pre-16S rRNA nuclease (149 aa).

This sequence belongs to the YqgF nuclease family.

It is found in the cytoplasm. Could be a nuclease involved in processing of the 5'-end of pre-16S rRNA. The polypeptide is Putative pre-16S rRNA nuclease (Synechococcus elongatus (strain ATCC 33912 / PCC 7942 / FACHB-805) (Anacystis nidulans R2)).